Consider the following 690-residue polypeptide: Eukaryotic translation initiation factor 3 subunit B (690 aa).

Residues M1–G11 show a composition bias toward basic and acidic residues. Residues M1–S36 form a disordered region. Positions N15 to F25 are enriched in acidic residues. One can recognise an RRM domain in the interval S57 to D141. WD repeat units lie at residues T207–K246, D293–L331, I334–E369, E442–L484, and P530–T575. Positions E595–R645 form a coiled coil.

The protein belongs to the eIF-3 subunit B family. As to quaternary structure, component of the eukaryotic translation initiation factor 3 (eIF-3) complex. The eIF-3 complex interacts with pix. Interacts with mxt.

The protein resides in the cytoplasm. Its function is as follows. RNA-binding component of the eukaryotic translation initiation factor 3 (eIF-3) complex, which is involved in protein synthesis of a specialized repertoire of mRNAs and, together with other initiation factors, stimulates binding of mRNA and methionyl-tRNAi to the 40S ribosome. The eIF-3 complex specifically targets and initiates translation of a subset of mRNAs involved in cell proliferation. The sequence is that of Eukaryotic translation initiation factor 3 subunit B from Drosophila erecta (Fruit fly).